The primary structure comprises 441 residues: Nucleoprotein (441 aa).

The tract at residues 1–56 (MSYTPGHHAGSRSSSGNRSGILKKTSWVDQSERSHQTYNRGRKPQPKFTVSTQPQG) is disordered. The span at 11–20 (SRSSSGNRSG) shows a compositional bias: low complexity. Residues 53 to 193 (QPQGNPIPHY…GYYVEGSGRS (141 aa)) form an RNA-binding region. The CoV N NTD domain occupies 60–189 (PHYSWFSGIT…ILPQGYYVEG (130 aa)). The RNA site is built by arginine 105 and arginine 121. Serine 158 carries the phosphoserine; by host modification. Arginine 163 is an RNA binding site. Position 173 is a phosphothreonine; by host (threonine 173). The segment at 186-226 (YVEGSGRSASNSRPGSRSQSRGPNNRSLSRSNSNFRHSDSI) is disordered. Positions 189–220 (GSGRSASNSRPGSRSQSRGPNNRSLSRSNSNF) are enriched in low complexity. Serine 190 is subject to Phosphoserine; by host. One can recognise a CoV N CTD domain in the interval 257–379 (AKEIRHKILM…ENLDAYVNSN (123 aa)). Residues 264 to 382 (ILMKPRQKRT…DAYVNSNQNT (119 aa)) are dimerization. Polar residues predominate over residues 380–389 (QNTVSGSLSP). Residues 380–408 (QNTVSGSLSPKPQRKRGVKQSPESFDSLN) are disordered. Residues serine 388 and serine 417 each carry the phosphoserine; by host modification. A Phosphothreonine; by host modification is found at threonine 421.

Belongs to the betacoronavirus nucleocapsid protein family. As to quaternary structure, homooligomer. Both monomeric and oligomeric forms interact with RNA. Interacts with protein M. Interacts with NSP3; this interaction serves to tether the genome to the newly translated replicase-transcriptase complex at a very early stage of infection. Post-translationally, ADP-ribosylated. The ADP-ribosylation is retained in the virion during infection. In terms of processing, phosphorylated on serine and threonine residues.

Its subcellular location is the virion. The protein localises to the host endoplasmic reticulum-Golgi intermediate compartment. It is found in the host Golgi apparatus. In terms of biological role, packages the positive strand viral genome RNA into a helical ribonucleocapsid (RNP) and plays a fundamental role during virion assembly through its interactions with the viral genome and membrane protein M. Plays an important role in enhancing the efficiency of subgenomic viral RNA transcription as well as viral replication. This Homo sapiens (Human) protein is Nucleoprotein.